The sequence spans 87 residues: Small ribosomal subunit protein bS16 (87 aa).

Belongs to the bacterial ribosomal protein bS16 family.

This Aster yellows witches'-broom phytoplasma (strain AYWB) protein is Small ribosomal subunit protein bS16.